We begin with the raw amino-acid sequence, 145 residues long: D-aminoacyl-tRNA deacylase (145 aa).

The short motif at 137–138 (GP) is the Gly-cisPro motif, important for rejection of L-amino acids element.

This sequence belongs to the DTD family. As to quaternary structure, homodimer.

It localises to the cytoplasm. The enzyme catalyses glycyl-tRNA(Ala) + H2O = tRNA(Ala) + glycine + H(+). It carries out the reaction a D-aminoacyl-tRNA + H2O = a tRNA + a D-alpha-amino acid + H(+). Its function is as follows. An aminoacyl-tRNA editing enzyme that deacylates mischarged D-aminoacyl-tRNAs. Also deacylates mischarged glycyl-tRNA(Ala), protecting cells against glycine mischarging by AlaRS. Acts via tRNA-based rather than protein-based catalysis; rejects L-amino acids rather than detecting D-amino acids in the active site. By recycling D-aminoacyl-tRNA to D-amino acids and free tRNA molecules, this enzyme counteracts the toxicity associated with the formation of D-aminoacyl-tRNA entities in vivo and helps enforce protein L-homochirality. This chain is D-aminoacyl-tRNA deacylase, found in Pseudoalteromonas translucida (strain TAC 125).